A 273-amino-acid chain; its full sequence is Urease accessory protein UreD (273 aa).

This sequence belongs to the UreD family. As to quaternary structure, ureD, UreF and UreG form a complex that acts as a GTP-hydrolysis-dependent molecular chaperone, activating the urease apoprotein by helping to assemble the nickel containing metallocenter of UreC. The UreE protein probably delivers the nickel.

Its subcellular location is the cytoplasm. Its function is as follows. Required for maturation of urease via the functional incorporation of the urease nickel metallocenter. This chain is Urease accessory protein UreD, found in Bacillus cereus (strain ATCC 10987 / NRS 248).